Reading from the N-terminus, the 85-residue chain is Cell division topological specificity factor (85 aa).

The protein belongs to the MinE family.

Functionally, prevents the cell division inhibition by proteins MinC and MinD at internal division sites while permitting inhibition at polar sites. This ensures cell division at the proper site by restricting the formation of a division septum at the midpoint of the long axis of the cell. The polypeptide is Cell division topological specificity factor (Xanthomonas euvesicatoria pv. vesicatoria (strain 85-10) (Xanthomonas campestris pv. vesicatoria)).